A 349-amino-acid polypeptide reads, in one-letter code: Quinolinate synthase (349 aa).

Iminosuccinate contacts are provided by histidine 52 and serine 69. Cysteine 114 provides a ligand contact to [4Fe-4S] cluster. Residues 140-142 (YFN) and serine 157 each bind iminosuccinate. Cysteine 201 serves as a coordination point for [4Fe-4S] cluster. Iminosuccinate contacts are provided by residues 227-229 (HPE) and threonine 255. Residue cysteine 300 participates in [4Fe-4S] cluster binding.

Belongs to the quinolinate synthase family. Type 2 subfamily. Requires [4Fe-4S] cluster as cofactor.

It localises to the cytoplasm. The enzyme catalyses iminosuccinate + dihydroxyacetone phosphate = quinolinate + phosphate + 2 H2O + H(+). The protein operates within cofactor biosynthesis; NAD(+) biosynthesis; quinolinate from iminoaspartate: step 1/1. Functionally, catalyzes the condensation of iminoaspartate with dihydroxyacetone phosphate to form quinolinate. This chain is Quinolinate synthase, found in Mycolicibacterium paratuberculosis (strain ATCC BAA-968 / K-10) (Mycobacterium paratuberculosis).